Here is a 367-residue protein sequence, read N- to C-terminus: GDP-perosamine synthase (367 aa).

K181 carries the post-translational modification N6-(pyridoxal phosphate)lysine.

The protein belongs to the DegT/DnrJ/EryC1 family. Homotetramer. The cofactor is pyridoxal 5'-phosphate.

It catalyses the reaction GDP-alpha-D-perosamine + 2-oxoglutarate = GDP-4-dehydro-alpha-D-rhamnose + L-glutamate. The protein operates within bacterial outer membrane biogenesis; LPS O-antigen biosynthesis. Its function is as follows. Catalyzes the synthesis of GDP-perosamine from GDP-4-keto-6-deoxy-D-mannose and L-glutamate. Also shows weak activity with L-glutamine. The protein is GDP-perosamine synthase of Vibrio cholerae.